A 496-amino-acid chain; its full sequence is UDP-N-acetylmuramate--L-alanine ligase (496 aa).

122–128 is an ATP binding site; sequence GTHGKTT.

Belongs to the MurCDEF family.

The protein resides in the cytoplasm. It catalyses the reaction UDP-N-acetyl-alpha-D-muramate + L-alanine + ATP = UDP-N-acetyl-alpha-D-muramoyl-L-alanine + ADP + phosphate + H(+). It participates in cell wall biogenesis; peptidoglycan biosynthesis. Cell wall formation. In Mycobacterium avium (strain 104), this protein is UDP-N-acetylmuramate--L-alanine ligase.